Here is a 412-residue protein sequence, read N- to C-terminus: Phosphate-repressible acid phosphatase (412 aa).

Residues 1–19 form the signal peptide; that stretch reads MLTKQTLLAFVGALALATG. N-linked (GlcNAc...) asparagine glycosylation is found at Asn74, Asn121, Asn186, and Asn208. Asp215 acts as the Proton donor in catalysis. N-linked (GlcNAc...) asparagine glycans are attached at residues Asn217, Asn332, and Asn343.

In terms of processing, the N-terminus is blocked.

Its subcellular location is the secreted. The catalysed reaction is a phosphate monoester + H2O = an alcohol + phosphate. The polypeptide is Phosphate-repressible acid phosphatase (PHOA) (Penicillium chrysogenum (Penicillium notatum)).